A 527-amino-acid polypeptide reads, in one-letter code: Proline--tRNA ligase (527 aa).

This sequence belongs to the class-II aminoacyl-tRNA synthetase family. ProS type 3 subfamily. As to quaternary structure, homodimer.

It is found in the cytoplasm. The catalysed reaction is tRNA(Pro) + L-proline + ATP = L-prolyl-tRNA(Pro) + AMP + diphosphate. Functionally, catalyzes the attachment of proline to tRNA(Pro) in a two-step reaction: proline is first activated by ATP to form Pro-AMP and then transferred to the acceptor end of tRNA(Pro). The sequence is that of Proline--tRNA ligase from Sphingopyxis alaskensis (strain DSM 13593 / LMG 18877 / RB2256) (Sphingomonas alaskensis).